Consider the following 239-residue polypeptide: Purine nucleoside phosphorylase DeoD-type (239 aa).

H5 is a binding site for a purine D-ribonucleoside. Phosphate contacts are provided by G21 and R25. Residue K27 is modified to N6-acetyllysine. Residues R44 and 88–91 (RVGS) each bind phosphate. Residues 180–182 (EME) and 204–205 (SD) contribute to the a purine D-ribonucleoside site. D205 acts as the Proton donor in catalysis.

The protein belongs to the PNP/UDP phosphorylase family. As to quaternary structure, homohexamer; trimer of homodimers.

It catalyses the reaction a purine D-ribonucleoside + phosphate = a purine nucleobase + alpha-D-ribose 1-phosphate. It carries out the reaction a purine 2'-deoxy-D-ribonucleoside + phosphate = a purine nucleobase + 2-deoxy-alpha-D-ribose 1-phosphate. Functionally, catalyzes the reversible phosphorolytic breakdown of the N-glycosidic bond in the beta-(deoxy)ribonucleoside molecules, with the formation of the corresponding free purine bases and pentose-1-phosphate. The sequence is that of Purine nucleoside phosphorylase DeoD-type from Escherichia coli O8 (strain IAI1).